Reading from the N-terminus, the 458-residue chain is Bifunctional protein GlmU (458 aa).

The segment at 1–228 (MHPKLDILIL…DWEVLGVNSK (228 aa)) is pyrophosphorylase. UDP-N-acetyl-alpha-D-glucosamine contacts are provided by residues 10 to 13 (LAAG), K24, Q75, 80 to 81 (GT), 102 to 104 (YGD), G139, E153, N168, and N226. Residue D104 participates in Mg(2+) binding. Residue N226 participates in Mg(2+) binding. Residues 229–249 (AQLAELERIHQNEVAQRLLAD) form a linker region. Positions 250–458 (GVTLMDPARL…KRPIKPKKEG (209 aa)) are N-acetyltransferase. UDP-N-acetyl-alpha-D-glucosamine contacts are provided by R332 and K350. The Proton acceptor role is filled by H362. Residues Y365 and N376 each contribute to the UDP-N-acetyl-alpha-D-glucosamine site. Residues A379, 385–386 (NY), S404, A422, and R439 each bind acetyl-CoA.

The protein in the N-terminal section; belongs to the N-acetylglucosamine-1-phosphate uridyltransferase family. It in the C-terminal section; belongs to the transferase hexapeptide repeat family. As to quaternary structure, homotrimer. The cofactor is Mg(2+).

The protein localises to the cytoplasm. The enzyme catalyses alpha-D-glucosamine 1-phosphate + acetyl-CoA = N-acetyl-alpha-D-glucosamine 1-phosphate + CoA + H(+). It catalyses the reaction N-acetyl-alpha-D-glucosamine 1-phosphate + UTP + H(+) = UDP-N-acetyl-alpha-D-glucosamine + diphosphate. The protein operates within nucleotide-sugar biosynthesis; UDP-N-acetyl-alpha-D-glucosamine biosynthesis; N-acetyl-alpha-D-glucosamine 1-phosphate from alpha-D-glucosamine 6-phosphate (route II): step 2/2. Its pathway is nucleotide-sugar biosynthesis; UDP-N-acetyl-alpha-D-glucosamine biosynthesis; UDP-N-acetyl-alpha-D-glucosamine from N-acetyl-alpha-D-glucosamine 1-phosphate: step 1/1. It functions in the pathway bacterial outer membrane biogenesis; LPS lipid A biosynthesis. Catalyzes the last two sequential reactions in the de novo biosynthetic pathway for UDP-N-acetylglucosamine (UDP-GlcNAc). The C-terminal domain catalyzes the transfer of acetyl group from acetyl coenzyme A to glucosamine-1-phosphate (GlcN-1-P) to produce N-acetylglucosamine-1-phosphate (GlcNAc-1-P), which is converted into UDP-GlcNAc by the transfer of uridine 5-monophosphate (from uridine 5-triphosphate), a reaction catalyzed by the N-terminal domain. In Thiobacillus denitrificans (strain ATCC 25259 / T1), this protein is Bifunctional protein GlmU.